The sequence spans 283 residues: Non-selective voltage-gated ion channel VDAC3 (283 aa).

C2 bears the N-acetylcysteine mark. A Phosphothreonine modification is found at T4. N6-acetyllysine is present on residues K12, K15, and K20. Beta stranded transmembrane passes span M26 to S35 and V39 to A47. K53 participates in a covalent cross-link: Glycyl lysine isopeptide (Lys-Gly) (interchain with G-Cter in ubiquitin). A run of 3 beta stranded transmembrane segments spans residues A54–I64, L69–N76, and T80–N89. K90 is modified (N6-acetyllysine). A beta stranded membrane pass occupies residues L95 to V104. Residues K109 and K110 each participate in a glycyl lysine isopeptide (Lys-Gly) (interchain with G-Cter in ubiquitin) cross-link. Beta stranded transmembrane passes span S111–R120, F123–D130, T137–A145, L150–D158, K163–A175, F178–N185, E189–V198, I202–T211, R218–L227, and T231–N238. A Phosphoserine modification is found at S241. NAD(+) contacts are provided by residues L242–G244 and S260–D264. A run of 2 beta stranded transmembrane segments spans residues L242 to L251 and G254 to I263. K266 is subject to N6-acetyllysine; alternate. A Glycyl lysine isopeptide (Lys-Gly) (interchain with G-Cter in ubiquitin); alternate cross-link involves residue K266. Residues H273 to E282 traverse the membrane as a beta stranded segment.

The protein belongs to the eukaryotic mitochondrial porin family. Interacts with ARMC12 in a TBC1D21-dependent manner. Interacts with MISFA. Post-translationally, ubiquitinated by PRKN during mitophagy, leading to its degradation and enhancement of mitophagy. Deubiquitinated by USP30.

Its subcellular location is the mitochondrion outer membrane. It is found in the membrane. The catalysed reaction is chloride(in) = chloride(out). It carries out the reaction K(+)(in) = K(+)(out). Non-selective voltage-gated ion channel that mediates the transport of anions and cations through the mitochondrion outer membrane and plasma membrane. Forms a high-conducting channel with a stable open state and a voltage-induced closure with a mild preference for anions over cations. Involved in male fertility and sperm mitochondrial sheath formation. The polypeptide is Non-selective voltage-gated ion channel VDAC3 (Sus scrofa (Pig)).